A 546-amino-acid polypeptide reads, in one-letter code: Chaperonin GroEL (546 aa).

ATP is bound by residues Thr-30–Pro-33, Lys-51, Asp-87–Thr-91, Gly-415, and Asp-496. The disordered stretch occupies residues Pro-526 to Met-546. Over residues Ala-532–Met-546 the composition is skewed to gly residues.

Belongs to the chaperonin (HSP60) family. Forms a cylinder of 14 subunits composed of two heptameric rings stacked back-to-back. Interacts with the co-chaperonin GroES.

Its subcellular location is the cytoplasm. The catalysed reaction is ATP + H2O + a folded polypeptide = ADP + phosphate + an unfolded polypeptide.. Its function is as follows. Together with its co-chaperonin GroES, plays an essential role in assisting protein folding. The GroEL-GroES system forms a nano-cage that allows encapsulation of the non-native substrate proteins and provides a physical environment optimized to promote and accelerate protein folding. In Ruegeria pomeroyi (strain ATCC 700808 / DSM 15171 / DSS-3) (Silicibacter pomeroyi), this protein is Chaperonin GroEL.